The following is a 721-amino-acid chain: Ribonuclease R (721 aa).

Positions 249–587 (RRSIIDREII…VHRLLWMFIF (339 aa)) constitute an RNB domain. The S1 motif domain maps to 639–719 (GKEFIGVVTT…LTRKIDFELV (81 aa)).

The protein belongs to the RNR ribonuclease family. RNase R subfamily.

The protein resides in the cytoplasm. The enzyme catalyses Exonucleolytic cleavage in the 3'- to 5'-direction to yield nucleoside 5'-phosphates.. Functionally, 3'-5' exoribonuclease that releases 5'-nucleoside monophosphates and is involved in maturation of structured RNAs. In Ureaplasma parvum serovar 3 (strain ATCC 700970), this protein is Ribonuclease R.